A 266-amino-acid chain; its full sequence is Chymotrypsin-like elastase family member 1 (266 aa).

Residues 1–16 (MLRFLVLATLVLYGHS) form the signal peptide. Positions 17 to 26 (TRDFPETNAR) are cleaved as a propeptide — activation peptide. The Peptidase S1 domain maps to 27–264 (VVGGTEARKN…YISWINNVIA (238 aa)). A disulfide bridge links cysteine 56 with cysteine 72. Histidine 71 functions as the Charge relay system in the catalytic mechanism. Residues glutamate 85, asparagine 87, glutamine 90, and glutamate 95 each coordinate Ca(2+). Asparagine 87 carries N-linked (GlcNAc...) asparagine glycosylation. The Charge relay system role is filled by aspartate 119. Cystine bridges form between cysteine 153–cysteine 220, cysteine 184–cysteine 200, and cysteine 210–cysteine 240. Catalysis depends on serine 214, which acts as the Charge relay system. An N-linked (GlcNAc...) asparagine glycan is attached at asparagine 241.

It belongs to the peptidase S1 family. Elastase subfamily. Ca(2+) is required as a cofactor.

It is found in the secreted. The enzyme catalyses Hydrolysis of proteins, including elastin. Preferential cleavage: Ala-|-Xaa.. Functionally, serine proteases that hydrolyze many proteins in addition to elastin. In Felis catus (Cat), this protein is Chymotrypsin-like elastase family member 1 (CELA1).